The sequence spans 214 residues: S-crystallin 1 (214 aa).

In terms of domain architecture, GST N-terminal spans 2–79; the sequence is PSYTLHYFNH…YLAREFGFHG (78 aa). A GST C-terminal domain is found at 81-214; the sequence is NNMEMARVDF…YLQRRCRTDF (134 aa).

Belongs to the GST superfamily. In terms of tissue distribution, lens.

Functionally, S-crystallins are structural components of squids and octopi eye lens. Contains relatively little GST activity (1/1000 of that of mammalian GST enzyme). The chain is S-crystallin 1 (OCTS1) from Octopus vulgaris (Common octopus).